A 404-amino-acid polypeptide reads, in one-letter code: MDSLRLRPSLLAARAPGAASLPPLRRDHFLPPLCSIHRNGKRPVSLSSQRTQGPSFDQCQKFFGWKSSHHRIPHRPTSSSADASGQPLQSSAEAHDSSSIWKPISSSLDAFYRFSRPHTVIGTALSIVSVSLLAVENLSDVSPLFLTGLLEAVVAALFMNIYIVGLNQLFDIEIDKVNKPTLPLASGEYSPATGVALVSAFAAMSFGLGWAVGSQPLFLALFISFILGTAYSINLPFLRWKRSAVVAALCILAVRAVIVQLAFFLHIQTFVFRRPAVFTRPLIFATAFMTFFSVVIALFKDIPDIEGDRIFGIKSFSVRLGQKKVFWICVGLLEMAYCVAILMGATSACLWSKYATVVGHAILAAILWNRSRSIDLTSKTAITSFYMFIWKLFYAEYLLIPLVR.

The transit peptide at 1–77 directs the protein to the chloroplast; sequence MDSLRLRPSL…SHHRIPHRPT (77 aa). Residues 68–96 form a disordered region; it reads SHHRIPHRPTSSSADASGQPLQSSAEAHD. Over residues 76 to 92 the composition is skewed to polar residues; sequence PTSSSADASGQPLQSSA. 9 consecutive transmembrane segments (helical) span residues 119-139, 144-164, 184-204, 216-238, 245-265, 282-302, 325-345, 348-368, and 382-402; these read TVIGTALSIVSVSLLAVENLS, LFLTGLLEAVVAALFMNIYIV, LASGEYSPATGVALVSAFAAM, PLFLALFISFILGTAYSINLPFL, VVAALCILAVRAVIVQLAFFL, LIFATAFMTFFSVVIALFKDI, VFWICVGLLEMAYCVAILMGA, ACLWSKYATVVGHAILAAILW, and ITSFYMFIWKLFYAEYLLIPL.

Belongs to the UbiA prenyltransferase family.

It localises to the plastid. Its subcellular location is the chloroplast thylakoid membrane. It carries out the reaction phytyl diphosphate + homogentisate + H(+) = 2-methyl-6-phytyl-1,4-benzene-1,4-diol + CO2 + diphosphate. It functions in the pathway cofactor biosynthesis; tocopherol biosynthesis. Involved in the synthesis of tocopherol (vitamin E). Catalyzes the condensation of homogentisate and phytyl diphosphate to form dimethylphytylhydroquinone. In Oryza sativa subsp. japonica (Rice), this protein is Probable homogentisate phytyltransferase 1, chloroplastic (HPT1).